Consider the following 130-residue polypeptide: Small ribosomal subunit protein uS9 (130 aa).

It belongs to the universal ribosomal protein uS9 family.

This Neisseria gonorrhoeae (strain ATCC 700825 / FA 1090) protein is Small ribosomal subunit protein uS9.